The primary structure comprises 493 residues: Endothelial lipase (493 aa).

Positions 1 to 23 (MRDPVFLLGFWSLYCCFPAGSLT) are cleaved as a signal peptide. Cys-66 and Cys-79 are oxidised to a cystine. Residues Asn-67 and Asn-82 are each glycosylated (N-linked (GlcNAc...) asparagine). The Nucleophile role is filled by Ser-171. Catalysis depends on Asp-195, which acts as the Charge relay system. Cys-254 and Cys-274 are joined by a disulfide. Catalysis depends on His-276, which acts as the Charge relay system. Intrachain disulfides connect Cys-299/Cys-318 and Cys-310/Cys-313. Heparin is bound at residue 327–339 (KMRKKRNSKMYLK). In terms of domain architecture, PLAT spans 349–484 (YHYQLKVHMF…SPGQELWFYK (136 aa)). Asn-395 carries N-linked (GlcNAc...) asparagine glycosylation. Cys-465 and Cys-485 are joined by a disulfide.

It belongs to the AB hydrolase superfamily. Lipase family. Head to tail Homodimer. Interacts with apolipoprotein C-2.

It localises to the secreted. The enzyme catalyses a triacylglycerol + H2O = a diacylglycerol + a fatty acid + H(+). It catalyses the reaction a 1,2-diacyl-sn-glycero-3-phosphocholine + H2O = a 2-acyl-sn-glycero-3-phosphocholine + a fatty acid + H(+). It carries out the reaction 1,2,3-tri-(9Z-octadecenoyl)-glycerol + H2O = di-(9Z)-octadecenoylglycerol + (9Z)-octadecenoate + H(+). The catalysed reaction is 1,2,3-tributanoylglycerol + H2O = dibutanoylglycerol + butanoate + H(+). The enzyme catalyses 1,2-dihexadecanoyl-sn-glycero-3-phosphocholine + H2O = hexadecanoyl-sn-glycero-3-phosphocholine + hexadecanoate + H(+). Its function is as follows. Exerts both phospholipase and triglyceride lipase activities. More active as a phospholipase than a triglyceride lipase. Hydrolyzes triglycerides, both with short-chain fatty acyl groups (tributyrin) and long-chain fatty acyl groups (triolein) with similar levels of activity toward both types of substrates. Hydrolyzes high density lipoproteins (HDL) more efficiently than other lipoproteins. This Rattus norvegicus (Rat) protein is Endothelial lipase (Lipg).